A 384-amino-acid polypeptide reads, in one-letter code: Beta-glucuronosyltransferase GlcAT14C (384 aa).

The Cytoplasmic segment spans residues 1–11; it reads MKRSHISSPRS. The chain crosses the membrane as a signal-anchor for type II membrane protein span at residues 12–34; that stretch reads YSRPAISIFGVFLLFLLVLTLSS. The Lumenal segment spans residues 35–384; it reads RKPSDSSSGL…HENFRAKQCK (350 aa). N156, N285, and N306 each carry an N-linked (GlcNAc...) asparagine glycan.

The protein belongs to the glycosyltransferase 14 family.

It localises to the golgi apparatus membrane. Its function is as follows. Beta-glucuronosyltransferase involved in the biosynthesis of type II arabinogalactan (AG). Modifies both the beta-1,6-linked galactan and beta-1,3-linked galactan present in type II AG. The sequence is that of Beta-glucuronosyltransferase GlcAT14C from Arabidopsis thaliana (Mouse-ear cress).